The following is a 744-amino-acid chain: 3-isopropylmalate dehydratase (744 aa).

The [4Fe-4S] cluster site is built by Cys341, Cys401, and Cys404.

This sequence belongs to the aconitase/IPM isomerase family. Monomer. [4Fe-4S] cluster is required as a cofactor.

It carries out the reaction (2R,3S)-3-isopropylmalate = (2S)-2-isopropylmalate. Its pathway is amino-acid biosynthesis; L-leucine biosynthesis; L-leucine from 3-methyl-2-oxobutanoate: step 2/4. In terms of biological role, catalyzes the isomerization between 2-isopropylmalate and 3-isopropylmalate, via the formation of 2-isopropylmaleate. This chain is 3-isopropylmalate dehydratase (leu1), found in Phycomyces blakesleeanus (strain ATCC 8743b / DSM 1359 / FGSC 10004 / NBRC 33097 / NRRL 1555).